Here is a 139-residue protein sequence, read N- to C-terminus: Putative nickel-responsive regulator (139 aa).

Positions 79, 90, 92, and 98 each coordinate Ni(2+).

It belongs to the transcriptional regulatory CopG/NikR family. Ni(2+) is required as a cofactor.

Its function is as follows. Transcriptional regulator. The sequence is that of Putative nickel-responsive regulator from Anaeromyxobacter dehalogenans (strain 2CP-C).